The chain runs to 110 residues: Large ribosomal subunit protein uL22 (110 aa).

This sequence belongs to the universal ribosomal protein uL22 family. In terms of assembly, part of the 50S ribosomal subunit.

In terms of biological role, this protein binds specifically to 23S rRNA; its binding is stimulated by other ribosomal proteins, e.g. L4, L17, and L20. It is important during the early stages of 50S assembly. It makes multiple contacts with different domains of the 23S rRNA in the assembled 50S subunit and ribosome. The globular domain of the protein is located near the polypeptide exit tunnel on the outside of the subunit, while an extended beta-hairpin is found that lines the wall of the exit tunnel in the center of the 70S ribosome. This Vesicomyosocius okutanii subsp. Calyptogena okutanii (strain HA) protein is Large ribosomal subunit protein uL22.